The sequence spans 1681 residues: Y' element ATP-dependent helicase protein 1 copy 2 (1681 aa).

A Helicase ATP-binding domain is found at 683–860; that stretch reads EIYMADTPSV…LQRIGLTGLA (178 aa). 696–703 lines the ATP pocket; the sequence is APPGYGKT. Residues 917 to 1066 enclose the Helicase C-terminal domain; that stretch reads KLLLALFEIE…EFYGLESKKG (150 aa). The span at 1140–1283 shows a compositional bias: low complexity; it reads ANASTNATTN…ATTTESTNAS (144 aa). The segment at 1140 to 1307 is disordered; the sequence is ANASTNATTN…RFHPVTDINK (168 aa). Over residues 1284-1307 the composition is skewed to basic and acidic residues; it reads AKEDANKDGNAEDNRFHPVTDINK.

It belongs to the helicase family. Yeast subtelomeric Y' repeat subfamily.

Functionally, catalyzes DNA unwinding and is involved in telomerase-independent telomere maintenance. The sequence is that of Y' element ATP-dependent helicase protein 1 copy 2 (YRF1-2) from Saccharomyces cerevisiae (strain ATCC 204508 / S288c) (Baker's yeast).